The following is an 809-amino-acid chain: Leucine-rich repeat and calponin homology domain-containing protein (809 aa).

A disordered region spans residues 27–53 (GSASLPGSGTGSGSGIGHAGNTSSSTS). Gly residues predominate over residues 34–44 (SGTGSGSGIGH). LRR repeat units follow at residues 72–96 (EAHFSGELILTNRKLKDFPRTGTKY), 98–121 (LTDTVIADLSRNRFAELPEEVTTF), 122–144 (AFLETLLLYHNTIRSIPESVKQL), 145–168 (SSLTYLDLRSNQLSSLPREICFLP), 170–189 (QVLLVSNNRLTSLPDELGRL), 191–213 (QTLTDLDASYNQLANLPARLGEL), 214–236 (RSLRSLSLRSNHLLYLPRELTCL), 238–258 (LISLDVSNNKIASLPLEIRHM), and 260–282 (TLVELQLENNPLTSPPASLCMRG). Disordered regions lie at residues 295-373 (TKDE…LHCV), 423-442 (LSYAHSNSSSNGSSPDQDDD), and 490-550 (KHPN…VDDV). Over residues 319-336 (HNSSGNVLEASTTGSTNN) the composition is skewed to polar residues. Residues 351–368 (GLDKRWSHDAPTKSKTDS) show a composition bias toward basic and acidic residues. Polar residues predominate over residues 518-532 (NTLPKSIMKQNSNQI). A Calponin-homology (CH) domain is found at 662 to 776 (QREETELMSQ…TVGELFRLHG (115 aa)). Positions 783 to 809 (GNSSGAATPTKSPTRTTRATMSPTPLA) are disordered. Residues 788–809 (AATPTKSPTRTTRATMSPTPLA) are compositionally biased toward polar residues.

The protein localises to the cytoplasm. The protein resides in the cytoskeleton. It is found in the cell cortex. It localises to the cleavage furrow. May play a role in the stabilization of the actin-rich cell cortex during cell division. In Drosophila melanogaster (Fruit fly), this protein is Leucine-rich repeat and calponin homology domain-containing protein.